The primary structure comprises 413 residues: Putative competence-damage inducible protein (413 aa).

Belongs to the CinA family.

The polypeptide is Putative competence-damage inducible protein (Lacticaseibacillus paracasei (strain ATCC 334 / BCRC 17002 / CCUG 31169 / CIP 107868 / KCTC 3260 / NRRL B-441) (Lactobacillus paracasei)).